The chain runs to 859 residues: Alanine--tRNA ligase (859 aa).

Residues H562, H566, C664, and H668 each contribute to the Zn(2+) site.

It belongs to the class-II aminoacyl-tRNA synthetase family. The cofactor is Zn(2+).

It is found in the cytoplasm. It carries out the reaction tRNA(Ala) + L-alanine + ATP = L-alanyl-tRNA(Ala) + AMP + diphosphate. Functionally, catalyzes the attachment of alanine to tRNA(Ala) in a two-step reaction: alanine is first activated by ATP to form Ala-AMP and then transferred to the acceptor end of tRNA(Ala). Also edits incorrectly charged Ser-tRNA(Ala) and Gly-tRNA(Ala) via its editing domain. This is Alanine--tRNA ligase from Aliivibrio fischeri (strain ATCC 700601 / ES114) (Vibrio fischeri).